We begin with the raw amino-acid sequence, 328 residues long: GMP reductase (328 aa).

The active-site Thioimidate intermediate is the Cys176. Residue 205 to 228 participates in NADP(+) binding; it reads IIADGGIRTHGDIAKSIRFGASMI.

The protein belongs to the IMPDH/GMPR family. GuaC type 2 subfamily.

It catalyses the reaction IMP + NH4(+) + NADP(+) = GMP + NADPH + 2 H(+). Its function is as follows. Catalyzes the irreversible NADPH-dependent deamination of GMP to IMP. It functions in the conversion of nucleobase, nucleoside and nucleotide derivatives of G to A nucleotides, and in maintaining the intracellular balance of A and G nucleotides. The protein is GMP reductase of Streptococcus pneumoniae serotype 4 (strain ATCC BAA-334 / TIGR4).